Consider the following 628-residue polypeptide: Biosynthetic arginine decarboxylase (628 aa).

At Lys-99 the chain carries N6-(pyridoxal phosphate)lysine. 279 to 289 serves as a coordination point for substrate; sequence VDVGGGLGIDY.

The protein belongs to the Orn/Lys/Arg decarboxylase class-II family. SpeA subfamily. It depends on Mg(2+) as a cofactor. Pyridoxal 5'-phosphate serves as cofactor.

It carries out the reaction L-arginine + H(+) = agmatine + CO2. It functions in the pathway amine and polyamine biosynthesis; agmatine biosynthesis; agmatine from L-arginine: step 1/1. Functionally, catalyzes the biosynthesis of agmatine from arginine. This is Biosynthetic arginine decarboxylase from Xylella fastidiosa (strain M23).